Reading from the N-terminus, the 783-residue chain is Probable phosphoketolase (783 aa).

Belongs to the XFP family. Thiamine diphosphate is required as a cofactor.

The protein is Probable phosphoketolase of Rhodopseudomonas palustris (strain TIE-1).